Here is a 405-residue protein sequence, read N- to C-terminus: Octaketide synthase 3 (405 aa).

Positions 1-10 (MGSIAESSPL) are enriched in polar residues. The tract at residues 1–22 (MGSIAESSPLMSRENVEGIRKA) is disordered. Cys-176 is an active-site residue. CoA is bound by residues Ser-283 and 320–323 (GGRA).

Belongs to the thiolase-like superfamily. Chalcone/stilbene synthases family. In terms of assembly, homodimer.

Its pathway is secondary metabolite biosynthesis; flavonoid biosynthesis. Its function is as follows. Catalyzes the iterative condensations of 8 molecules of malonyl-CoA to produce aromatic octaketides, SEK4 and SEK4b, the products of the minimal polyketide synthase for the benzoisochromanequinone actinorhodin. May be involved in the biosynthesis of the octaketide barbaloin. The protein is Octaketide synthase 3 (PKS5) of Aloe arborescens (Kidachi aloe).